A 251-amino-acid chain; its full sequence is Hydroxyacylglutathione hydrolase (251 aa).

7 residues coordinate Zn(2+): histidine 53, histidine 55, aspartate 57, histidine 58, histidine 110, aspartate 127, and histidine 165.

Belongs to the metallo-beta-lactamase superfamily. Glyoxalase II family. Monomer. It depends on Zn(2+) as a cofactor.

The catalysed reaction is an S-(2-hydroxyacyl)glutathione + H2O = a 2-hydroxy carboxylate + glutathione + H(+). It functions in the pathway secondary metabolite metabolism; methylglyoxal degradation; (R)-lactate from methylglyoxal: step 2/2. Functionally, thiolesterase that catalyzes the hydrolysis of S-D-lactoyl-glutathione to form glutathione and D-lactic acid. The chain is Hydroxyacylglutathione hydrolase from Shigella boydii serotype 4 (strain Sb227).